The sequence spans 235 residues: Large ribosomal subunit protein uL1 (235 aa).

It belongs to the universal ribosomal protein uL1 family. In terms of assembly, part of the 50S ribosomal subunit.

Binds directly to 23S rRNA. The L1 stalk is quite mobile in the ribosome, and is involved in E site tRNA release. In terms of biological role, protein L1 is also a translational repressor protein, it controls the translation of the L11 operon by binding to its mRNA. This chain is Large ribosomal subunit protein uL1, found in Mycobacterium sp. (strain JLS).